The following is a 229-amino-acid chain: 7-cyano-7-deazaguanine synthase (229 aa).

Leucine 15–valine 25 is a binding site for ATP. Zn(2+)-binding residues include cysteine 194, cysteine 204, cysteine 207, and cysteine 210.

Belongs to the QueC family. Zn(2+) is required as a cofactor.

It catalyses the reaction 7-carboxy-7-deazaguanine + NH4(+) + ATP = 7-cyano-7-deazaguanine + ADP + phosphate + H2O + H(+). Its pathway is purine metabolism; 7-cyano-7-deazaguanine biosynthesis. Catalyzes the ATP-dependent conversion of 7-carboxy-7-deazaguanine (CDG) to 7-cyano-7-deazaguanine (preQ(0)). The polypeptide is 7-cyano-7-deazaguanine synthase (Pseudomonas savastanoi pv. phaseolicola (strain 1448A / Race 6) (Pseudomonas syringae pv. phaseolicola (strain 1448A / Race 6))).